Here is a 90-residue protein sequence, read N- to C-terminus: uncharacterized protein (90 aa).

An N-terminal signal peptide occupies residues 1 to 18 (MSRALFAVVLAFPLIALA).

This is an uncharacterized protein from Escherichia coli (strain K12).